The following is a 510-amino-acid chain: 2-isopropylmalate synthase (510 aa).

The region spanning 4–266 (IQVFDTTLRD…ETNLKLDETK (263 aa)) is the Pyruvate carboxyltransferase domain. Residues D13, H201, H203, and N237 each contribute to the Mn(2+) site. The tract at residues 390 to 510 (QVETLQLQFV…DTARKDGVVS (121 aa)) is regulatory domain.

Belongs to the alpha-IPM synthase/homocitrate synthase family. LeuA type 1 subfamily. Homodimer. Mn(2+) is required as a cofactor.

It localises to the cytoplasm. The catalysed reaction is 3-methyl-2-oxobutanoate + acetyl-CoA + H2O = (2S)-2-isopropylmalate + CoA + H(+). The protein operates within amino-acid biosynthesis; L-leucine biosynthesis; L-leucine from 3-methyl-2-oxobutanoate: step 1/4. Its function is as follows. Catalyzes the condensation of the acetyl group of acetyl-CoA with 3-methyl-2-oxobutanoate (2-ketoisovalerate) to form 3-carboxy-3-hydroxy-4-methylpentanoate (2-isopropylmalate). The sequence is that of 2-isopropylmalate synthase from Staphylococcus carnosus (strain TM300).